The following is a 292-amino-acid chain: G1/S-specific cyclin-D3 (292 aa).

One can recognise a Cyclin N-terminal domain in the interval 27–152 (VLQSLLRLEE…LVLGKLKWDL (126 aa)). Residues 255 to 292 (LREAAQTSPSPAPKAPRGSSSQGPSQTSTPTDVTAIHL) form a disordered region. Serine 264 and serine 279 each carry phosphoserine. Positions 272–285 (GSSSQGPSQTSTPT) are enriched in low complexity. Residue threonine 283 is modified to Phosphothreonine.

It belongs to the cyclin family. Cyclin D subfamily. In terms of assembly, interacts with the CDK4 and CDK6 protein kinases to form a serine/threonine kinase holoenzyme complex. The cyclin subunit imparts substrate specificity to the complex. Interacts with ATF5. Interacts with EIF3K. Component of the ternary complex cyclin D/CDK4/CDKN1B required for nuclear translocation and modulation of CDK4-mediated kinase activity. Can form similar complexes with either CDKN1A or CDKN2A. Post-translationally, phosphorylation at Thr-283 by MAP kinases is required for ubiquitination and degradation by the DCX(AMBRA1) complex. In terms of processing, ubiquitinated by the DCX(AMBRA1) complex during the transition from G1 to S cell phase, leading to its degradation: ubiquitination is dependent on Thr-283 phosphorylation. The DCX(AMBRA1) complex represents the major regulator of CCND3 stability during the G1/S transition. Polyubiquitinated by the SCF(FBXL2) complex, leading to proteasomal degradation.

It is found in the nucleus. The protein localises to the cytoplasm. Functionally, regulatory component of the cyclin D3-CDK4 (DC) complex that phosphorylates and inhibits members of the retinoblastoma (RB) protein family including RB1 and regulates the cell-cycle during G(1)/S transition. Phosphorylation of RB1 allows dissociation of the transcription factor E2F from the RB/E2F complex and the subsequent transcription of E2F target genes which are responsible for the progression through the G(1) phase. Hypophosphorylates RB1 in early G(1) phase. Cyclin D-CDK4 complexes are major integrators of various mitogenenic and antimitogenic signals. Component of the ternary complex, cyclin D3/CDK4/CDKN1B, required for nuclear translocation and activity of the cyclin D-CDK4 complex. Shows transcriptional coactivator activity with ATF5 independently of CDK4. The polypeptide is G1/S-specific cyclin-D3 (CCND3) (Bos taurus (Bovine)).